Consider the following 184-residue polypeptide: Ribosome-recycling factor (184 aa).

The protein belongs to the RRF family.

The protein localises to the cytoplasm. Its function is as follows. Responsible for the release of ribosomes from messenger RNA at the termination of protein biosynthesis. May increase the efficiency of translation by recycling ribosomes from one round of translation to another. This Acinetobacter baylyi (strain ATCC 33305 / BD413 / ADP1) protein is Ribosome-recycling factor.